We begin with the raw amino-acid sequence, 692 residues long: Polyphosphate kinase (692 aa).

Position 57 (Asn57) interacts with ATP. Mg(2+) is bound by residues Arg383 and Arg413. The active-site Phosphohistidine intermediate is His443. ATP is bound by residues Tyr476, Arg572, and His600.

The protein belongs to the polyphosphate kinase 1 (PPK1) family. Mg(2+) is required as a cofactor. An intermediate of this reaction is the autophosphorylated ppk in which a phosphate is covalently linked to a histidine residue through a N-P bond.

The enzyme catalyses [phosphate](n) + ATP = [phosphate](n+1) + ADP. In terms of biological role, catalyzes the reversible transfer of the terminal phosphate of ATP to form a long-chain polyphosphate (polyP). This is Polyphosphate kinase from Acinetobacter baumannii (strain AYE).